Here is a 143-residue protein sequence, read N- to C-terminus: uncharacterized protein (143 aa).

A signal peptide spans 1–16 (MSRNRLFLVAGSLAVA). The helical transmembrane segment at 114 to 134 (GAYVFLGPGFTPGSPSGGSGG) threads the bilayer.

Its subcellular location is the membrane. This is an uncharacterized protein from Mycobacterium tuberculosis (strain CDC 1551 / Oshkosh).